Here is a 514-residue protein sequence, read N- to C-terminus: Palmitoyltransferase pfa3 (514 aa).

The Cytoplasmic segment spans residues 1-31; it reads MATLAMSTPSSPTWPKRRPKAWAMRCERYCC. The helical transmembrane segment at 32 to 52 threads the bilayer; the sequence is AAASYFPLAFVYSLTTWAVYV. Residues 53-64 are Lumenal-facing; that stretch reads EASVGLKPSSSS. A helical transmembrane segment spans residues 65–85; sequence WIGLPSSILGVVLYLALNISY. The Cytoplasmic segment spans residues 86–174; sequence TTAVFTDPGS…TCVGLRNYKA (89 aa). The 51-residue stretch at 130 to 180 folds into the DHHC domain; the sequence is RFCKKCQCPKPDRAHHCSTCKRCVLKMDHHCPWLATCVGLRNYKAFLLFLI. The helical transmembrane segment at 175–195 threads the bilayer; the sequence is FLLFLIYTSLFCWVDFGVSAI. Residues 196 to 209 are Lumenal-facing; the sequence is WIWTEVFNDTRYMD. Residues 210 to 230 traverse the membrane as a helical segment; it reads GILPVNVVLLSILGGIIGLVL. At 231-514 the chain is on the cytoplasmic side; that stretch reads TGFTAWHISL…SREDDWRDWD (284 aa). 2 disordered regions span residues 307-336 and 436-514; these read VTRP…DLER and GNEL…RDWD. Residues 318–328 are compositionally biased toward polar residues; the sequence is DNLTPAQQALS. Basic and acidic residues predominate over residues 505 to 514; the sequence is SREDDWRDWD.

Belongs to the DHHC palmitoyltransferase family. PFA3 subfamily. In terms of processing, autopalmitoylated.

Its subcellular location is the vacuole membrane. The enzyme catalyses L-cysteinyl-[protein] + hexadecanoyl-CoA = S-hexadecanoyl-L-cysteinyl-[protein] + CoA. In terms of biological role, palmitoyltransferase specific for VAC8. Palmitoylates VAC8 at one or more of its N-terminal cysteine residues, which is required for its proper membrane localization. This chain is Palmitoyltransferase pfa3 (pfa3), found in Emericella nidulans (strain FGSC A4 / ATCC 38163 / CBS 112.46 / NRRL 194 / M139) (Aspergillus nidulans).